The sequence spans 235 residues: Small ribosomal subunit protein eS4 (235 aa).

The region spanning 38-99 (VTLLTIIRDY…GESYRVVYNN (62 aa)) is the S4 RNA-binding domain.

This sequence belongs to the eukaryotic ribosomal protein eS4 family.

In Thermoplasma volcanium (strain ATCC 51530 / DSM 4299 / JCM 9571 / NBRC 15438 / GSS1), this protein is Small ribosomal subunit protein eS4 (rps4e).